Consider the following 1770-residue polypeptide: Transposon Ty2-OR2 Gag-Pol polyprotein (1770 aa).

Disordered regions lie at residues 1 to 88 and 359 to 449; these read MESQ…YQQH and QHSE…SNDE. Polar residues-rich tracts occupy residues 19-39 and 49-60; these read ASVTSKEVPSNQDPLAVSASN and KVNSQEETTPGT. The RNA-binding stretch occupies residues 295–397; that stretch reads ENNINVSDRL…SSKPRAAKAH (103 aa). Over residues 369-381 the composition is skewed to low complexity; sequence TSPNTTNTKVTTR. 2 stretches are compositionally biased toward polar residues: residues 399-408 and 415-435; these read IATSSKFSRV and ESTVSSQYLSDDNELSLGQQQ. Asp457 acts as the For protease activity; shared with dimeric partner in catalysis. The tract at residues 579-636 is integrase-type zinc finger-like; it reads NVNKSKSVNKYPYPLIHRMLGHANFRSIQKSLKKNAVTYLKESDIEWSNASTYQCPDC. In terms of domain architecture, Integrase catalytic spans 656 to 831; that stretch reads ESYEPFQYLH…AGLDITTILP (176 aa). 2 residues coordinate Mg(2+): Asp667 and Asp732. Disordered stretches follow at residues 1005–1038, 1057–1135, 1146–1165, and 1170–1205; these read GGTIESDTTSPRHSSTFTARNQKRPGSPNDMIDL, GGTE…KSSK, LPLPDLTHKSPTDTSDVSKD, and HSRQTNSSLGGMDDSNVLTTTKSKKRSLEDNETEIE. Composition is skewed to polar residues over residues 1009-1024 and 1065-1082; these read ESDTTSPRHSSTFTAR and QRNSDTNIKYRTTNSTPS. Residues 1151–1165 are compositionally biased toward basic and acidic residues; that stretch reads LTHKSPTDTSDVSKD. Positions 1193 to 1227 match the Bipartite nuclear localization signal motif; sequence KKRSLEDNETEIEVSRDTWNNKNMRSLEPPRSKKR. The Reverse transcriptase Ty1/copia-type domain occupies 1353-1491; that stretch reads NDYYITQLDI…DILGLEIKYQ (139 aa). 6 residues coordinate Mg(2+): Asp1361, Asp1442, Asp1443, Asp1625, Glu1667, and Asp1700. The 143-residue stretch at 1625–1767 folds into the RNase H Ty1/copia-type domain; that stretch reads DASYGNQPYY…IKTFKLLTNK (143 aa).

The capsid protein forms a homotrimer, from which the VLPs are assembled. The protease is a homodimer, whose active site consists of two apposed aspartic acid residues. In terms of processing, initially, virus-like particles (VLPs) are composed of the structural unprocessed proteins Gag and Gag-Pol, and also contain the host initiator methionine tRNA (tRNA(i)-Met) which serves as a primer for minus-strand DNA synthesis, and a dimer of genomic Ty RNA. Processing of the polyproteins occurs within the particle and proceeds by an ordered pathway, called maturation. First, the protease (PR) is released by autocatalytic cleavage of the Gag-Pol polyprotein, and this cleavage is a prerequisite for subsequent processing at the remaining sites to release the mature structural and catalytic proteins. Maturation takes place prior to the RT reaction and is required to produce transposition-competent VLPs.

It is found in the cytoplasm. It localises to the nucleus. It catalyses the reaction DNA(n) + a 2'-deoxyribonucleoside 5'-triphosphate = DNA(n+1) + diphosphate. It carries out the reaction Endonucleolytic cleavage to 5'-phosphomonoester.. Its function is as follows. Capsid protein (CA) is the structural component of the virus-like particle (VLP), forming the shell that encapsulates the retrotransposons dimeric RNA genome. The particles are assembled from trimer-clustered units and there are holes in the capsid shells that allow for the diffusion of macromolecules. CA also has nucleocapsid-like chaperone activity, promoting primer tRNA(i)-Met annealing to the multipartite primer-binding site (PBS), dimerization of Ty2 RNA and initiation of reverse transcription. The aspartyl protease (PR) mediates the proteolytic cleavages of the Gag and Gag-Pol polyproteins after assembly of the VLP. Functionally, reverse transcriptase/ribonuclease H (RT) is a multifunctional enzyme that catalyzes the conversion of the retro-elements RNA genome into dsDNA within the VLP. The enzyme displays a DNA polymerase activity that can copy either DNA or RNA templates, and a ribonuclease H (RNase H) activity that cleaves the RNA strand of RNA-DNA heteroduplexes during plus-strand synthesis and hydrolyzes RNA primers. The conversion leads to a linear dsDNA copy of the retrotransposon that includes long terminal repeats (LTRs) at both ends. In terms of biological role, integrase (IN) targets the VLP to the nucleus, where a subparticle preintegration complex (PIC) containing at least integrase and the newly synthesized dsDNA copy of the retrotransposon must transit the nuclear membrane. Once in the nucleus, integrase performs the integration of the dsDNA into the host genome. The protein is Transposon Ty2-OR2 Gag-Pol polyprotein (TY2B-OR2) of Saccharomyces cerevisiae (strain ATCC 204508 / S288c) (Baker's yeast).